A 495-amino-acid chain; its full sequence is tRNA(Ile)-lysidine synthase (495 aa).

26 to 31 (SGGSDS) is an ATP binding site.

The protein belongs to the tRNA(Ile)-lysidine synthase family.

The protein localises to the cytoplasm. It carries out the reaction cytidine(34) in tRNA(Ile2) + L-lysine + ATP = lysidine(34) in tRNA(Ile2) + AMP + diphosphate + H(+). In terms of biological role, ligates lysine onto the cytidine present at position 34 of the AUA codon-specific tRNA(Ile) that contains the anticodon CAU, in an ATP-dependent manner. Cytidine is converted to lysidine, thus changing the amino acid specificity of the tRNA from methionine to isoleucine. The sequence is that of tRNA(Ile)-lysidine synthase from Bartonella tribocorum (strain CIP 105476 / IBS 506).